The primary structure comprises 501 residues: MGVLVVLLGVLSFLGRTLGGSPALHWDSTSCHLARPIPGRPLRSLSFLGKDAQGLALFHAHWDGHGRLQVCSRQDEPELTAAYGALCAGEITRGSFIHTPGPELQRALATLQSQWEACRGPAESPAGTREKRAAGQNGVPGIGRQWVKRGWTVPGTLWCGVGDSAGNSSELGVFQGPDLCCREHDRCPHNVSPFQYNYGIRNYRFHTISHCNCDARFQQCLQDQRDSVSDIMGVAFFNVLAIPCFVLEEQEACVEWYWWGGCRRYGSVPFARLQPRTFYNASWSSPATSLTPSPQNPALSRPQPMQHPQQWPSEWKESKSPSKTNATALQAPVASPGSDRASTVQLEVTHPGFQGTTGGRKPPGAHRACRSFRHLDQCEHQIGPQETKFQLFNSAHEPLFHCNCTRRLARFLRLHGPPVGASMLWELPGMTCFKLAPPLDCAEGKGCPRDPRAFKVSARHLLRLQQRRLQLQGTGTDNGQVWPSEDQGAPISFYNRCLQLT.

An N-terminal signal peptide occupies residues 1–19; sequence MGVLVVLLGVLSFLGRTLG. Residues 119-139 are disordered; the sequence is RGPAESPAGTREKRAAGQNGV. A phospholipase A2-like region spans residues 150–291; sequence GWTVPGTLWC…SWSSPATSLT (142 aa). Residues W158, G160, and G162 each contribute to the Ca(2+) site. 4 disulfides stabilise this stretch: C159–C181, C180–C220, C187–C213, and C211–C244. The N-linked (GlcNAc...) asparagine glycan is linked to N167. H184 is a catalytic residue. Ca(2+) is bound at residue D185. D214 is a catalytic residue. N280 carries an N-linked (GlcNAc...) asparagine glycan. The span at 284 to 298 shows a compositional bias: polar residues; the sequence is SSPATSLTPSPQNPA. A disordered region spans residues 284-339; that stretch reads SSPATSLTPSPQNPALSRPQPMQHPQQWPSEWKESKSPSKTNATALQAPVASPGSD. N325 and N403 each carry an N-linked (GlcNAc...) asparagine glycan.

Belongs to the phospholipase A2 family. The cofactor is Ca(2+). N-glycosylation does not affect the catalytic activity, but is required for proper secretion. A nonglycosylated form was observed in several cell types. In terms of processing, in several cell types, the N- and C-termini are cleaved off.

It is found in the secreted. The protein resides in the cell membrane. It localises to the cytoplasm. The protein localises to the cytoskeleton. Its subcellular location is the microtubule organizing center. It is found in the centrosome. The protein resides in the centriole. It localises to the recycling endosome. The catalysed reaction is a 1,2-diacyl-sn-glycero-3-phosphocholine + H2O = a 1-acyl-sn-glycero-3-phosphocholine + a fatty acid + H(+). It carries out the reaction 1-hexadecanoyl-2-(9Z,12Z-octadecadienoyl)-sn-glycero-3-phosphocholine + H2O = (9Z,12Z)-octadecadienoate + 1-hexadecanoyl-sn-glycero-3-phosphocholine + H(+). The enzyme catalyses 1-hexadecanoyl-2-(5Z,8Z,11Z,14Z-eicosatetraenoyl)-sn-glycero-3-phosphocholine + H2O = 1-hexadecanoyl-sn-glycero-3-phosphocholine + (5Z,8Z,11Z,14Z)-eicosatetraenoate + H(+). It catalyses the reaction 1-hexadecanoyl-2-(9Z,12Z-octadecadienoyl)-sn-glycero-3-phosphoethanolamine + H2O = 1-hexadecanoyl-sn-glycero-3-phosphoethanolamine + (9Z,12Z)-octadecadienoate + H(+). The catalysed reaction is 1-hexadecanoyl-2-(5Z,8Z,11Z,14Z-eicosatetraenoyl)-sn-glycero-3-phosphoethanolamine + H2O = 1-hexadecanoyl-sn-glycero-3-phosphoethanolamine + (5Z,8Z,11Z,14Z)-eicosatetraenoate + H(+). Its function is as follows. Secretory calcium-dependent phospholipase A2 that primarily targets extracellular phospholipids. Hydrolyzes the ester bond of the fatty acyl group attached at sn-2 position of phospholipids without apparent head group selectivity. Contributes to phospholipid remodeling of low-density lipoprotein (LDL) and high-density lipoprotein (HDL) particles. Hydrolyzes LDL phospholipids releasing unsaturated fatty acids that regulate macrophage differentiation toward foam cells. May act in an autocrine and paracrine manner. Secreted by immature mast cells, acts on nearby fibroblasts upstream to PTDGS to synthesize prostaglandin D2 (PGD2), which in turn promotes mast cell maturation and degranulation via PTGDR. Secreted by epididymal epithelium, acts on immature sperm cells within the duct, modulating the degree of unsaturation of the fatty acyl components of phosphatidylcholines required for acrosome assembly and sperm cell motility. Facilitates the replacement of fatty acyl chains in phosphatidylcholines in sperm membranes from omega-6 and omega-9 to omega-3 polyunsaturated fatty acids (PUFAs). Coupled to lipoxygenase pathway, may process omega-6 PUFAs to generate oxygenated lipid mediators in the male reproductive tract. At pericentrosomal preciliary compartment, negatively regulates ciliogenesis likely by regulating endocytotic recycling of ciliary membrane protein. Coupled to cyclooxygenase pathway provides arachidonate to generate prostaglandin E2 (PGE2), a potent immunomodulatory lipid in inflammation and tumorigenesis. At colonic epithelial barrier, preferentially hydrolyzes phospholipids having arachidonate and docosahexaenoate at sn-2 position, contributing to the generation of oxygenated metabolites involved in colonic stem cell homeostasis. Releases C16:0 and C18:0 lysophosphatidylcholine subclasses from neuron plasma membranes and promotes neurite outgrowth and neuron survival. This Bos taurus (Bovine) protein is Group 3 secretory phospholipase A2 (PLA2G3).